Reading from the N-terminus, the 301-residue chain is Protoheme IX farnesyltransferase (301 aa).

9 helical membrane passes run 29 to 49 (VVALMLLTVLVGMCLALPGAV), 51 to 71 (LQPLVFGMLGIAMMAGSAAAF), 101 to 121 (AFSFAFSLGVLGFVLLYWWVN), 123 to 143 (LTAWLTFASLIGYAVVYTAYL), 150 to 170 (NIVIGGLAGAMPPLLGWTAVT), 177 to 197 (ALLLVIIIFTWTPPHFWALAI), 223 to 243 (CILLYTFLLALACLLPVLVGM), 244 to 264 (SGPVYLVGSSILSCGFIYKAW), and 281 to 301 (FSIYHLMLLFVVLLVDHYLWG).

Belongs to the UbiA prenyltransferase family. Protoheme IX farnesyltransferase subfamily.

It localises to the cell inner membrane. It catalyses the reaction heme b + (2E,6E)-farnesyl diphosphate + H2O = Fe(II)-heme o + diphosphate. It functions in the pathway porphyrin-containing compound metabolism; heme O biosynthesis; heme O from protoheme: step 1/1. Converts heme B (protoheme IX) to heme O by substitution of the vinyl group on carbon 2 of heme B porphyrin ring with a hydroxyethyl farnesyl side group. The polypeptide is Protoheme IX farnesyltransferase (Shewanella denitrificans (strain OS217 / ATCC BAA-1090 / DSM 15013)).